Reading from the N-terminus, the 427-residue chain is Glutamate-1-semialdehyde 2,1-aminomutase (427 aa).

An N6-(pyridoxal phosphate)lysine modification is found at Lys-265.

It belongs to the class-III pyridoxal-phosphate-dependent aminotransferase family. HemL subfamily. Homodimer. Requires pyridoxal 5'-phosphate as cofactor.

The protein resides in the cytoplasm. The catalysed reaction is (S)-4-amino-5-oxopentanoate = 5-aminolevulinate. It participates in porphyrin-containing compound metabolism; protoporphyrin-IX biosynthesis; 5-aminolevulinate from L-glutamyl-tRNA(Glu): step 2/2. In Burkholderia pseudomallei (strain 1710b), this protein is Glutamate-1-semialdehyde 2,1-aminomutase.